The primary structure comprises 241 residues: Tubulin-like protein alpha-4B (241 aa).

Residues 1–10 show a composition bias toward basic and acidic residues; that stretch reads MRHQQTERQD. Residues 1-20 form a disordered region; it reads MRHQQTERQDPSQPLSRQHG. Residue Asp-10 participates in GTP binding. Asp-10 is a Mg(2+) binding site. Polar residues predominate over residues 11–20; that stretch reads PSQPLSRQHG. GTP contacts are provided by Ser-79, Gly-83, Thr-84, Thr-118, Asn-145, and Asn-167. The active site involves Glu-193.

Belongs to the tubulin family. Requires Mg(2+) as cofactor. Some glutamate residues at the C-terminus are polyglutamylated, resulting in polyglutamate chains on the gamma-carboxyl group. Polyglutamylation plays a key role in microtubule severing by spastin (SPAST). SPAST preferentially recognizes and acts on microtubules decorated with short polyglutamate tails: severing activity by SPAST increases as the number of glutamates per tubulin rises from one to eight, but decreases beyond this glutamylation threshold. Glutamylation is also involved in cilia motility. Post-translationally, some glutamate residues at the C-terminus are monoglycylated but not polyglycylated due to the absence of functional TTLL10 in human. Monoglycylation is mainly limited to tubulin incorporated into cilia and flagella axonemes, which is required for their stability and maintenance. Flagella glycylation controls sperm motility. Both polyglutamylation and monoglycylation can coexist on the same protein on adjacent residues, and lowering glycylation levels increases polyglutamylation, and reciprocally.

The protein resides in the cytoplasm. It is found in the cytoskeleton. The enzyme catalyses GTP + H2O = GDP + phosphate + H(+). In terms of biological role, tubulin is the major constituent of microtubules, a cylinder consisting of laterally associated linear protofilaments composed ofalpha- and beta-tubulin heterodimers. This Homo sapiens (Human) protein is Tubulin-like protein alpha-4B (TUBA4B).